A 658-amino-acid polypeptide reads, in one-letter code: ATP-dependent zinc metalloprotease FtsH 4 (658 aa).

The tract at residues 1–22 (MREPTNRQGSPGPGEPRPPAQG) is disordered. The Cytoplasmic segment spans residues 1 to 28 (MREPTNRQGSPGPGEPRPPAQGRPRFPT). Residues 29-49 (WILWVALLALALWNVYTFFWP) form a helical membrane-spanning segment. At 50-149 (SSGARLNIPY…TVKIDQAGGS (100 aa)) the chain is on the extracellular side. Positions 95 to 114 (QVLSPGDPVPPGTSPNEIRT) are disordered. Residues 150–170 (VWPSLLATIVPLFLFIGLMVY) form a helical membrane-spanning segment. Topologically, residues 171 to 658 (LGRSMSRGQQ…AAPAAAADSV (488 aa)) are cytoplasmic. 243–250 (GPPGTGKT) contacts ATP. Histidine 464 is a Zn(2+) binding site. Glutamate 465 is a catalytic residue. Zn(2+) is bound by residues histidine 468 and aspartate 540.

It in the central section; belongs to the AAA ATPase family. In the C-terminal section; belongs to the peptidase M41 family. As to quaternary structure, homohexamer. Requires Zn(2+) as cofactor.

The protein resides in the cell membrane. Acts as a processive, ATP-dependent zinc metallopeptidase for both cytoplasmic and membrane proteins. Plays a role in the quality control of integral membrane proteins. The sequence is that of ATP-dependent zinc metalloprotease FtsH 4 (ftsh4) from Sphaerobacter thermophilus (strain ATCC 49802 / DSM 20745 / KCCM 41009 / NCIMB 13125 / S 6022).